The sequence spans 1117 residues: DNA polymerase (1117 aa).

The segment at 591–621 (ESSPVASFEEDSEQTSDSSLGEVSSQGSSDG) is disordered. The span at 606–618 (SDSSLGEVSSQGS) shows a compositional bias: low complexity.

Belongs to the DNA polymerase type-B family.

The protein resides in the host nucleus. The catalysed reaction is DNA(n) + a 2'-deoxyribonucleoside 5'-triphosphate = DNA(n+1) + diphosphate. The protein is DNA polymerase of Cavia porcellus (Guinea pig).